A 325-amino-acid polypeptide reads, in one-letter code: Replication factor C small subunit (325 aa).

54-61 (GPAGTGKT) provides a ligand contact to ATP.

Belongs to the activator 1 small subunits family. RfcS subfamily. Heteromultimer composed of small subunits (RfcS) and large subunits (RfcL).

Part of the RFC clamp loader complex which loads the PCNA sliding clamp onto DNA. The chain is Replication factor C small subunit from Haloarcula marismortui (strain ATCC 43049 / DSM 3752 / JCM 8966 / VKM B-1809) (Halobacterium marismortui).